The chain runs to 91 residues: Proline, histidine and glycine-rich protein 1 (91 aa).

Residues 1 to 91 (MHPGGKGHCG…HCGPHPGPHH (91 aa)) form a disordered region. 3 stretches are compositionally biased toward gly residues: residues 33 to 42 (HPGHGPGHCP), 49 to 63 (GHGGPSHGHGPGHCP), and 70 to 82 (GHGGPSHGHGPGH).

The sequence is that of Proline, histidine and glycine-rich protein 1 (Phgr1) from Mus musculus (Mouse).